The chain runs to 159 residues: Heavy metal-associated isoprenylated plant protein 28 (159 aa).

The HMA domain maps to 10–73; the sequence is LQTIEMRVHM…KVRKTGRRAE (64 aa). Residues cysteine 21 and cysteine 24 each coordinate a metal cation. Cysteine methyl ester is present on cysteine 156. Cysteine 156 carries S-farnesyl cysteine lipidation. The propeptide at 157–159 is removed in mature form; the sequence is SIM.

Belongs to the HIPP family.

In terms of biological role, heavy-metal-binding protein. This chain is Heavy metal-associated isoprenylated plant protein 28, found in Arabidopsis thaliana (Mouse-ear cress).